Consider the following 442-residue polypeptide: uncharacterized protein (442 aa).

[4Fe-4S] cluster-binding residues include C43, C49, C52, and C130. Q273, Y302, E323, and D372 together coordinate S-adenosyl-L-methionine. Catalysis depends on C399, which acts as the Nucleophile.

Belongs to the class I-like SAM-binding methyltransferase superfamily. RNA M5U methyltransferase family.

This is an uncharacterized protein from Protochlamydia amoebophila (strain UWE25).